The primary structure comprises 642 residues: Mediator of RNA polymerase II transcription subunit 17 (642 aa).

The interval 210 to 232 (AEETGDEDTASSSNSSSSVSGNN) is disordered. The segment covering 220–232 (SSSNSSSSVSGNN) has biased composition (low complexity).

Belongs to the Mediator complex subunit 17 family. As to quaternary structure, component of the Mediator complex, which includes at least CDK8, MED4, MED6, MED11, MED14, MED17, MED18, MED20, MED21, MED22, MED27, MED28, MED30 and MED31. Interacts with Hsf.

Its subcellular location is the nucleus. The protein localises to the chromosome. Its function is as follows. Component of the Mediator complex, a coactivator involved in the regulated transcription of nearly all RNA polymerase II-dependent genes. Mediator functions as a bridge to convey information from gene-specific regulatory proteins to the basal RNA polymerase II transcription machinery. Mediator is recruited to promoters by direct interactions with regulatory proteins and serves as a scaffold for the assembly of a functional preinitiation complex with RNA polymerase II and the general transcription factors. Required for activated transcription of the MtnA, MtnB and MtnD genes. Negatively regulates sex comb development. The chain is Mediator of RNA polymerase II transcription subunit 17 (MED17) from Drosophila melanogaster (Fruit fly).